The sequence spans 495 residues: Ectonucleoside triphosphate diphosphohydrolase 8 (495 aa).

Residues 1-8 (MGLSRKEQ) are Cytoplasmic-facing. A helical membrane pass occupies residues 9–29 (VFLALLGASGVSGLTALILLL). Residues 30 to 471 (VEATSVLLPT…AESYGVWVAK (442 aa)) lie on the Extracellular side of the membrane. An N-linked (GlcNAc...) asparagine glycan is attached at Asn67. Residues Cys78 and Cys102 are joined by a disulfide bond. Catalysis depends on Glu168, which acts as the Proton acceptor. Cys246 and Cys292 are disulfide-bonded. Asn304 is a glycosylation site (N-linked (GlcNAc...) asparagine). Cys329 and Cys335 are oxidised to a cystine. The N-linked (GlcNAc...) asparagine glycan is linked to Asn363. The cysteines at positions 381 and 403 are disulfide-linked. A helical membrane pass occupies residues 472–492 (VVFMVLALVAVVGAALVQLFW). The Cytoplasmic portion of the chain corresponds to 493–495 (LQD).

It belongs to the GDA1/CD39 NTPase family. Requires Ca(2+) as cofactor. It depends on Mg(2+) as a cofactor. N-glycosylated.

It is found in the cell membrane. The catalysed reaction is a ribonucleoside 5'-triphosphate + 2 H2O = a ribonucleoside 5'-phosphate + 2 phosphate + 2 H(+). Its activity is regulated as follows. Not inhibited by ARL 67156. Its function is as follows. Canalicular ectonucleoside NTPDase responsible for the main hepatic NTPDase activity. Ectonucleoside NTPDases catalyze the hydrolysis of gamma- and beta-phosphate residues of nucleotides, playing a central role in concentration of extracellular nucleotides. Has activity toward ATP, ADP, UTP and UDP, but not toward AMP. The chain is Ectonucleoside triphosphate diphosphohydrolase 8 (ENTPD8) from Homo sapiens (Human).